A 73-amino-acid polypeptide reads, in one-letter code: Large ribosomal subunit protein bL31 (73 aa).

The Zn(2+) site is built by C16, C18, C37, and C40.

The protein belongs to the bacterial ribosomal protein bL31 family. Type A subfamily. As to quaternary structure, part of the 50S ribosomal subunit. The cofactor is Zn(2+).

Its function is as follows. Binds the 23S rRNA. The polypeptide is Large ribosomal subunit protein bL31 (Marinobacter nauticus (strain ATCC 700491 / DSM 11845 / VT8) (Marinobacter aquaeolei)).